Here is a 405-residue protein sequence, read N- to C-terminus: Elongation factor Tu (405 aa).

In terms of domain architecture, tr-type G spans K10–Q213. A G1 region spans residues G19 to S26. G19–S26 lines the GTP pocket. Residue S26 coordinates Mg(2+). Residues G64–N68 form a G2 region. Positions D85–G88 are G3. Residues D85 to H89 and N140 to D143 contribute to the GTP site. The tract at residues N140–D143 is G4. A G5 region spans residues S178 to L180.

Belongs to the TRAFAC class translation factor GTPase superfamily. Classic translation factor GTPase family. EF-Tu/EF-1A subfamily. As to quaternary structure, monomer.

The protein resides in the cytoplasm. The enzyme catalyses GTP + H2O = GDP + phosphate + H(+). Its function is as follows. GTP hydrolase that promotes the GTP-dependent binding of aminoacyl-tRNA to the A-site of ribosomes during protein biosynthesis. This is Elongation factor Tu from Aquifex aeolicus (strain VF5).